The chain runs to 501 residues: Cytochrome P450 2J1 (501 aa).

Cys-447 is a binding site for heme.

It belongs to the cytochrome P450 family. Requires heme as cofactor. Small intestine.

The protein resides in the endoplasmic reticulum membrane. Its subcellular location is the microsome membrane. The enzyme catalyses an organic molecule + reduced [NADPH--hemoprotein reductase] + O2 = an alcohol + oxidized [NADPH--hemoprotein reductase] + H2O + H(+). Catalyzes the N-demethylation of benzphetamine to formaldehyde. The polypeptide is Cytochrome P450 2J1 (CYP2J1) (Oryctolagus cuniculus (Rabbit)).